The primary structure comprises 300 residues: Arrestin domain-containing protein 4 (300 aa).

2 consecutive short sequence motifs (PPxY motif) follow at residues 231 to 234 (PPNY) and 276 to 279 (PPLY).

Belongs to the arrestin family. As to quaternary structure, interacts with ADRB2. Interacts (via PPxY motifs) with ITCH, NEDD4L and WWP2. Interacts with AVPR2. Identified in a complex containing at least ARRDC4, AVPR2 and HGS. Interacts with SLC11A2; controls the incorporation of SLC11A2 into extracellular vesicles through an ubiquitination-dependent mechanism. Interacts with TRIM65.

The protein localises to the early endosome. It localises to the cell membrane. Its subcellular location is the cytoplasmic vesicle. In terms of biological role, functions as an adapter recruiting ubiquitin-protein ligases to their specific substrates. Plays a role in endocytosis of activated G protein-coupled receptors (GPCRs) Through an ubiquitination-dependent mechanism also plays a role in the incorporation of SLC11A2 into extracellular vesicles. May play a role in glucose uptake. Participates in innate immune response by promoting IFIH1/MDA5 activation through interaction with TRIM65. In Rattus norvegicus (Rat), this protein is Arrestin domain-containing protein 4 (Arrdc4).